The following is a 393-amino-acid chain: tRNA(Met) cytidine acetate ligase (393 aa).

Residues glycine 81, asparagine 142, and arginine 167 each contribute to the ATP site.

This sequence belongs to the TmcAL family.

It is found in the cytoplasm. The enzyme catalyses cytidine(34) in elongator tRNA(Met) + acetate + ATP = N(4)-acetylcytidine(34) in elongator tRNA(Met) + AMP + diphosphate. Functionally, catalyzes the formation of N(4)-acetylcytidine (ac(4)C) at the wobble position of elongator tRNA(Met), using acetate and ATP as substrates. First activates an acetate ion to form acetyladenylate (Ac-AMP) and then transfers the acetyl group to tRNA to form ac(4)C34. This is tRNA(Met) cytidine acetate ligase from Bacillus cereus (strain ATCC 10987 / NRS 248).